Reading from the N-terminus, the 320-residue chain is Probable serine proteinase inhibitor 1 (320 aa).

This sequence belongs to the serpin family. Poxviruses subfamily.

The chain is Probable serine proteinase inhibitor 1 (SPI-1) from Swinepox virus (strain Kasza) (SWPV).